Reading from the N-terminus, the 280-residue chain is Shikimate kinase (280 aa).

Residue 86 to 96 (PPGVGLKGSAA) participates in ATP binding.

It belongs to the GHMP kinase family. Archaeal shikimate kinase subfamily.

It localises to the cytoplasm. The catalysed reaction is shikimate + ATP = 3-phosphoshikimate + ADP + H(+). It functions in the pathway metabolic intermediate biosynthesis; chorismate biosynthesis; chorismate from D-erythrose 4-phosphate and phosphoenolpyruvate: step 5/7. The polypeptide is Shikimate kinase (aroK) (Aeropyrum pernix (strain ATCC 700893 / DSM 11879 / JCM 9820 / NBRC 100138 / K1)).